We begin with the raw amino-acid sequence, 254 residues long: Nickel import ATP-binding protein NikO (254 aa).

The 242-residue stretch at 5 to 246 (FELQGVQFAY…TALLRRARLL (242 aa)) folds into the ABC transporter domain. Position 37-44 (37-44 (GANGSGKS)) interacts with ATP.

Belongs to the ABC transporter superfamily. As to quaternary structure, forms an energy-coupling factor (ECF) transporter complex composed of an ATP-binding protein (A component, NikO), a transmembrane protein (T component, NikQ) and a fused possible substrate-capture protein (S component, NikMN) of unknown stoichimetry.

It is found in the cell inner membrane. It carries out the reaction Ni(2+)(out) + ATP + H2O = Ni(2+)(in) + ADP + phosphate + H(+). Functionally, part of the energy-coupling factor (ECF) transporter complex NikMNQO involved in nickel import. The complex confers nickel uptake upon expression in E.coli. Shows very low activity with cobalt. Presumably responsible for energy coupling to the transport system. The polypeptide is Nickel import ATP-binding protein NikO (Rhodobacter capsulatus (strain ATCC BAA-309 / NBRC 16581 / SB1003)).